Here is a 209-residue protein sequence, read N- to C-terminus: Uracil phosphoribosyltransferase (209 aa).

5-phospho-alpha-D-ribose 1-diphosphate contacts are provided by residues Arg-79, Arg-104, and 131–139 (DPMLATGGS). Residues Ile-194 and 199 to 201 (GDA) each bind uracil. Asp-200 contacts 5-phospho-alpha-D-ribose 1-diphosphate.

This sequence belongs to the UPRTase family. Mg(2+) serves as cofactor.

The enzyme catalyses UMP + diphosphate = 5-phospho-alpha-D-ribose 1-diphosphate + uracil. It participates in pyrimidine metabolism; UMP biosynthesis via salvage pathway; UMP from uracil: step 1/1. Its activity is regulated as follows. Allosterically activated by GTP. Catalyzes the conversion of uracil and 5-phospho-alpha-D-ribose 1-diphosphate (PRPP) to UMP and diphosphate. This chain is Uracil phosphoribosyltransferase, found in Clostridioides difficile (strain 630) (Peptoclostridium difficile).